We begin with the raw amino-acid sequence, 24 residues long: GLVSSIGRALGGLLADVVKSKQPA.

Belongs to the frog skin active peptide (FSAP) family. Caerin subfamily. In terms of tissue distribution, expressed by the skin dorsal glands.

Its subcellular location is the secreted. Functionally, inhibits the formation of NO by neuronal nitric oxide synthase. The protein is Caerin-2.1 of Litoria rothii (Roth's tree frog).